The following is a 475-amino-acid chain: Serralysin G (475 aa).

Residues 1–14 (MALYGKKTDLSSAS) constitute a propeptide that is removed on maturation. H186 is a Zn(2+) binding site. Residue E187 is part of the active site. The Zn(2+) site is built by H190 and Y226. Positions 261, 263, 265, 293, 295, 296, 298, 337, 342, 344, 346, 351, 355, 359, 360, 361, 362, 364, 368, 370, 371, 373, 377, 378, 379, 380, 382, 391, 398, and 408 each coordinate Ca(2+). Hemolysin-type calcium-binding repeat units follow at residues 340 to 357 (IGGS…DNRI) and 358 to 375 (DGGA…ADIL).

Belongs to the peptidase M10B family. Ca(2+) serves as cofactor. Zn(2+) is required as a cofactor.

The protein resides in the secreted. It catalyses the reaction Preferential cleavage of bonds with hydrophobic residues in P1'.. This chain is Serralysin G (prtG), found in Dickeya chrysanthemi (Pectobacterium chrysanthemi).